Reading from the N-terminus, the 125-residue chain is Cu-Zn superoxide dismutase-like protein (125 aa).

A disulfide bond links Cys52 and Cys102.

This sequence belongs to the Cu-Zn superoxide dismutase family.

The protein localises to the host cytoplasm. In terms of biological role, virion protein with no enzymatic activity. This is Cu-Zn superoxide dismutase-like protein from Mus musculus (Mouse).